Here is a 146-residue protein sequence, read N- to C-terminus: Putative pre-16S rRNA nuclease (146 aa).

It belongs to the YqgF nuclease family.

The protein resides in the cytoplasm. Functionally, could be a nuclease involved in processing of the 5'-end of pre-16S rRNA. This chain is Putative pre-16S rRNA nuclease, found in Burkholderia thailandensis (strain ATCC 700388 / DSM 13276 / CCUG 48851 / CIP 106301 / E264).